The sequence spans 74 residues: Heat shock factor-binding protein 1-like protein 1 (74 aa).

Positions 12 to 65 (RALRDAAENLFQELQEHFQALTATLNLRMEEMGNRIEDLQKNVKDLMVQAGIEN) form a coiled coil.

The protein belongs to the HSBP1 family.

This is Heat shock factor-binding protein 1-like protein 1 (HSBP1L1) from Homo sapiens (Human).